A 267-amino-acid chain; its full sequence is X-box-binding protein 1 (267 aa).

Over 1–180 the chain is Cytoplasmic; the sequence is MVVVAAAPSA…VQAQLSPPQN (180 aa). Residues 35–56 form a disordered region; sequence VPGPRAAGSEASGTPQARKRQR. Ser61 carries the post-translational modification Phosphoserine. The bZIP domain occupies 63-126; the sequence is EEKALRRKLK…HGLVVENQEL (64 aa). Residues 65-87 are basic motif; sequence KALRRKLKNRVAAQTARDRKKAR. The segment at 69–85 is nuclear localization signal (NLS); the sequence is RKLKNRVAAQTARDRKK. Residues 91-126 are leucine-zipper; sequence LEQQVVDLEEENHKLQLENQLLREKTHGLVVENQEL. Residues 181–198 traverse the membrane as a helical; Signal-anchor for type II membrane protein segment; sequence IFPWTLTLLPLQILSLIS. At 199-267 the chain is on the lumenal side; it reads FWAFWTSWTL…FVLTMYTPSL (69 aa). Residues 230-256 are necessary for the translational pausing of its own mRNA; it reads QKDLVPYQPPFLCQWGPHQPSWKPLMN.

It belongs to the bZIP family. Isoform 1 interacts with HM13. Isoform 1 interacts with RNF139; the interaction induces ubiquitination and degradation of isoform 1. Isoform 1 interacts (via luminal domain) with DERL1; the interaction obviates the need for ectodomain shedding prior HM13/SPP-mediated XBP1 isoform 1 cleavage. Isoform 1 interacts with isoform 2; the interaction sequesters isoform 2 from the nucleus and enhances isoform 2 degradation in the cytoplasm. Isoform 1 interacts with HDAC3 and AKT1; the interactions occur in endothelial cell (EC) under disturbed flow. Isoform 1 interacts with the oncoprotein FOS. Isoform 2 interacts with ATF6; the interaction occurs in a ER stress-dependent manner and is required for DNA binding to the unfolded protein response element (UPRE). Isoform 2 interacts with PIK3R1; the interaction is direct and induces translocation of XBP1 isoform 2 into the nucleus and the unfolded protein response (UPR) XBP1-dependent target genes activation in a ER stress- and/or insulin-dependent but PI3K-independent manner. Isoform 2 interacts with SIRT1. Isoform 2 interacts with PIK3R1 and PIK3R2; the interactions are direct and induce translocation of XBP1 isoform 2 into the nucleus and the unfolded protein response (UPR) XBP1-dependent target genes activation in a ER stress- and/or insulin-dependent but PI3K-independent manner. Isoform 2 interacts with FOXO1; the interaction is direct and leads to FOXO1 ubiquitination and degradation via the proteasome pathway in hepatocytes. Acetylated by EP300; acetylation positively regulates the transcriptional activity of XBP1 isoform 2. Isoform 2 is deacetylated by SIRT1; deacetylation negatively regulates the transcriptional activity of XBP1 isoform 2. In terms of processing, ubiquitinated, leading to proteasomal degradation in response to ER stress. Post-translationally, X-box-binding protein 1, cytoplasmic form and luminal form are produced by intramembrane proteolytic cleavage of ER membrane-anchored isoform 1 triggered by HM13/SPP in a DERL1-RNF139-dependent and VCP/p97-independent manner. X-box-binding protein 1, luminal form is ubiquitinated leading to proteasomal degradation. As to expression, isoform 1 and isoform 2 are expressed at higher level in branch curves of vessel walls and in atherosclerotic plaques relative to healthy segments of the same aortas (at protein level). Expressed in skeletal muscles, plasma cells and pancreatic beta cells. Isoform 1 and isoform 2 are expressed in gonadal adipose tissue. Isoform 1 is expressed in inguinal adipose tissue.

Its subcellular location is the endoplasmic reticulum. It localises to the nucleus. It is found in the cytoplasm. The protein localises to the endoplasmic reticulum membrane. The protein resides in the membrane. Functionally, functions as a transcription factor during endoplasmic reticulum stress by regulating the unfolded protein response (UPR). Required for cardiac myogenesis and hepatogenesis during embryonic development and the development of secretory tissues such as exocrine pancreas and salivary gland. Involved in differentiation of B lymphocytes to plasma cells and production of immunoglobulins. Modulates the cellular response to ER stress in a PIK3R-dependent manner. Binds to the cis-acting X box present in the promoter regions of major histocompatibility complex class II genes. Involved in VEGF-induced endothelial cell (EC) proliferation and retinal blood vessel formation during embryonic development but also for angiogenesis in adult tissues under ischemic conditions. Also functions as a major regulator of the UPR in obesity-induced insulin resistance and type 2 diabetes for the management of obesity and diabetes prevention. Plays a role in the unconventional cytoplasmic splicing processing of its own mRNA triggered by the endoplasmic reticulum (ER) transmembrane endoribonuclease ERN1: upon ER stress, the emerging XBP1 polypeptide chain, as part of a mRNA-ribosome-nascent chain (R-RNC) complex, cotranslationally recruits its own unprocessed mRNA through transient docking to the ER membrane and translational pausing, therefore facilitating efficient IRE1-mediated XBP1 mRNA isoform 2 production. In endothelial cells (EC), associated with KDR, promotes IRE1-mediated XBP1 mRNA isoform 2 production in a vascular endothelial growth factor (VEGF)-dependent manner, leading to EC proliferation and angiogenesis. Functions as a negative feed-back regulator of the potent transcription factor XBP1 isoform 2 protein levels through proteasome-mediated degradation, thus preventing the constitutive activation of the ER stress response signaling pathway. Inhibits the transactivation activity of XBP1 isoform 2 in myeloma cells. Acts as a weak transcriptional factor. Together with HDAC3, contributes to the activation of NFE2L2-mediated HMOX1 transcription factor gene expression in a PI(3)K/mTORC2/Akt-dependent signaling pathway leading to EC survival under disturbed flow/oxidative stress. Binds to the ER stress response element (ERSE) upon ER stress. Binds to the consensus 5'-GATGACGTG[TG]N(3)[AT]T-3' sequence related to cAMP responsive element (CRE)-like sequences. Binds the Tax-responsive element (TRE) present in the long terminal repeat (LTR) of T-cell leukemia virus type 1 (HTLV-I) and to the TPA response elements (TRE). Associates preferentially to the HDAC3 gene promoter region in a static flow-dependent manner. Binds to the CDH5/VE-cadherin gene promoter region. Its function is as follows. Functions as a stress-inducible potent transcriptional activator during endoplasmic reticulum (ER) stress by inducing unfolded protein response (UPR) target genes via binding to the UPR element (UPRE). Up-regulates target genes encoding ER chaperones and ER-associated degradation (ERAD) components to enhance the capacity of productive folding and degradation mechanism, respectively, in order to maintain the homeostasis of the ER under ER stress. Plays a role in the production of immunoglobulins and interleukin-6 in the presence of stimuli required for plasma cell differentiation, and promotes as well membrane phospholipid biosynthesis necessary for ER expansion. Contributes to the VEGF-induced endothelial cell (EC) growth and proliferation in a Akt/GSK-dependent and/or -independent signaling pathway, respectively, leading to beta-catenin nuclear translocation and E2F2 gene expression. Promotes umbilical vein EC apoptosis and atherosclerotisis development in a caspase-dependent signaling pathway, and contributes to VEGF-induced EC proliferation and angiogenesis in adult tissues under ischemic conditions. Involved in the regulation of endostatin-induced autophagy in EC through BECN1 transcriptional activation. Plays a role as an oncogene by promoting tumor progression: stimulates zinc finger protein SNAI1 transcription to induce epithelial-to-mesenchymal (EMT) transition, cell migration and invasion of breast cancer cells. Involved in adipocyte differentiation by regulating lipogenic gene expression during lactation. Plays a role in the survival of both dopaminergic neurons of the substantia nigra pars compacta (SNpc), by maintaining protein homeostasis and of myeloma cells. Increases insulin sensitivity in the liver as a response to a high carbohydrate diet, resulting in improved glucose tolerance. Also improves glucose homeostasis in an ER stress- and/or insulin-independent manner through both binding and proteasome-induced degradation of the transcription factor FOXO1, hence resulting in suppression of gluconeogenic genes expression and in a reduction of blood glucose levels. Controls the induction of de novo fatty acid synthesis in hepatocytes by regulating the expression of a subset of lipogenic genes in an ER stress- and UPR-independent manner. Binds to the 5'-CCACG-3' motif in the PPARG promoter. Associates preferentially to the HDAC3 gene promoter region in a disturbed flow-dependent manner. Binds to the BECN1 gene promoter region. Binds to the CDH5/VE-cadherin gene promoter region. Binds to the ER stress response element (ERSE) upon ER stress. This Mus musculus (Mouse) protein is X-box-binding protein 1.